Consider the following 392-residue polypeptide: Stilbene synthase 2 (392 aa).

55-58 serves as a coordination point for substrate; it reads KFNR. C164 is an active-site residue. Substrate contacts are provided by residues L267 and 305–307; that span reads GGP.

The protein belongs to the thiolase-like superfamily. Chalcone/stilbene synthases family. Homodimer.

It localises to the cytoplasm. The catalysed reaction is 4-coumaroyl-CoA + 3 malonyl-CoA + 3 H(+) = trans-resveratrol + 4 CO2 + 4 CoA. Its pathway is phytoalexin biosynthesis; 3,4',5-trihydroxystilbene biosynthesis; 3,4',5-trihydroxystilbene from trans-4-coumarate: step 2/2. Mediates resistance to pathogens which are sensitive to stilbenes. This is Stilbene synthase 2 from Vitis vinifera (Grape).